Consider the following 196-residue polypeptide: Endoribonuclease YbeY (196 aa).

Zn(2+)-binding residues include H120, H124, and H130.

The protein belongs to the endoribonuclease YbeY family. The cofactor is Zn(2+).

It localises to the cytoplasm. Functionally, single strand-specific metallo-endoribonuclease involved in late-stage 70S ribosome quality control and in maturation of the 3' terminus of the 16S rRNA. The protein is Endoribonuclease YbeY of Corynebacterium diphtheriae (strain ATCC 700971 / NCTC 13129 / Biotype gravis).